The chain runs to 152 residues: 1,4-dihydroxy-2-naphthoyl-CoA hydrolase (152 aa).

Residue D20 is part of the active site.

It belongs to the 4-hydroxybenzoyl-CoA thioesterase family. DHNA-CoA hydrolase subfamily.

It catalyses the reaction 1,4-dihydroxy-2-naphthoyl-CoA + H2O = 1,4-dihydroxy-2-naphthoate + CoA + H(+). It participates in cofactor biosynthesis; phylloquinone biosynthesis. It functions in the pathway quinol/quinone metabolism; 1,4-dihydroxy-2-naphthoate biosynthesis; 1,4-dihydroxy-2-naphthoate from chorismate: step 7/7. Functionally, catalyzes the hydrolysis of 1,4-dihydroxy-2-naphthoyl-CoA (DHNA-CoA) to 1,4-dihydroxy-2-naphthoate (DHNA), a reaction involved in phylloquinone (vitamin K1) biosynthesis. In Parasynechococcus marenigrum (strain WH8102), this protein is 1,4-dihydroxy-2-naphthoyl-CoA hydrolase.